The primary structure comprises 928 residues: Outer membrane protein SlpA (928 aa).

A signal peptide spans 1 to 23; that stretch reads MKKRLVTLLAGLLTVLSMGFGLA. Residues 24–84 enclose the SLH domain; the sequence is QFSDVPAGHW…QQIEEELKTQ (61 aa).

Homotrimer.

The protein localises to the cell outer membrane. In terms of biological role, plays an important role in the structural organization and integrity of the cell envelope, bridging the outer membrane to the peptidoglyan layer. Appears to be a nonselective channel. In Thermus thermophilus (strain ATCC 27634 / DSM 579 / HB8), this protein is Outer membrane protein SlpA (slpA).